Reading from the N-terminus, the 820-residue chain is Leucine--tRNA ligase (820 aa).

The 'HIGH' region motif lies at 40–51 (PYPSGAGLHVGH). Residues 601–605 (KMSKS) carry the 'KMSKS' region motif. K604 contributes to the ATP binding site.

The protein belongs to the class-I aminoacyl-tRNA synthetase family.

The protein localises to the cytoplasm. It catalyses the reaction tRNA(Leu) + L-leucine + ATP = L-leucyl-tRNA(Leu) + AMP + diphosphate. The sequence is that of Leucine--tRNA ligase from Chlamydia pneumoniae (Chlamydophila pneumoniae).